A 396-amino-acid polypeptide reads, in one-letter code: Phosphoglycerate kinase (396 aa).

Substrate-binding positions include 21–23 (DIN), Arg36, 59–62 (HFGR), Arg118, and Arg151. Residues Lys201, Glu323, and 353-356 (GGDT) contribute to the ATP site.

This sequence belongs to the phosphoglycerate kinase family. As to quaternary structure, monomer.

It localises to the cytoplasm. The catalysed reaction is (2R)-3-phosphoglycerate + ATP = (2R)-3-phospho-glyceroyl phosphate + ADP. The protein operates within carbohydrate degradation; glycolysis; pyruvate from D-glyceraldehyde 3-phosphate: step 2/5. The protein is Phosphoglycerate kinase of Ruegeria sp. (strain TM1040) (Silicibacter sp.).